The following is a 368-amino-acid chain: Cytochrome b (368 aa).

A run of 4 helical transmembrane segments spans residues 25 to 45, 69 to 90, 105 to 125, and 170 to 190; these read FGSM…FLAM, WIMQ…YIHI, WLSG…GYVL, and FFAL…IHII. Heme b contacts are provided by H75 and H89. Heme b is bound by residues H174 and H188. An a ubiquinone-binding site is contributed by H193. The next 4 membrane-spanning stretches (helical) occupy residues 218–238, 280–300, 312–332, and 339–358; these read YKDM…MSFT, LGGT…PFTH, LTQT…WTAT, and FIFI…IINP.

Belongs to the cytochrome b family. As to quaternary structure, the cytochrome bc1 complex contains 3 respiratory subunits (MT-CYB, CYC1 and UQCRFS1), 2 core proteins (UQCRC1 and UQCRC2) and probably 6 low-molecular weight proteins. Heme b is required as a cofactor.

The protein localises to the mitochondrion inner membrane. In terms of biological role, component of the ubiquinol-cytochrome c reductase complex (complex III or cytochrome b-c1 complex) that is part of the mitochondrial respiratory chain. The b-c1 complex mediates electron transfer from ubiquinol to cytochrome c. Contributes to the generation of a proton gradient across the mitochondrial membrane that is then used for ATP synthesis. The polypeptide is Cytochrome b (MT-CYB) (Notechis ater (Black tiger snake)).